Consider the following 197-residue polypeptide: Sodium/potassium-transporting ATPase subunit beta-1-interacting protein 3 (197 aa).

Helical transmembrane passes span 2–22 (GCCT…VSAL), 35–55 (APIL…FGTI), 62–82 (IMVY…IICF), and 152–172 (VQIL…SISM).

This sequence belongs to the NKAIN family. Interacts with ATP1B1.

It is found in the cell membrane. This is Sodium/potassium-transporting ATPase subunit beta-1-interacting protein 3 (NKAIN3) from Homo sapiens (Human).